The following is a 585-amino-acid chain: Protein FAM13C (585 aa).

Disordered regions lie at residues 26-45 (PVSLHEDQTDCSSLRDENNK), 83-138 (SMGN…NAFK), and 171-216 (EAAQ…APED). Basic and acidic residues-rich tracts occupy residues 27–45 (VSLHEDQTDCSSLRDENNK) and 99–112 (ESGRSHGESQETEH). Serine 131 carries the post-translational modification Phosphoserine. Serine 238 is modified (phosphoserine). 3 disordered regions span residues 250 to 282 (FNLDPESAPSPPSTQQFMMPRSSSRCSCGDGKE), 349 to 391 (EEQG…EETP), and 441 to 477 (IPTIQEEEDSDEDRPQGSQQPSLADPASHLPVGDHLT). Over residues 262-275 (STQQFMMPRSSSRC) the composition is skewed to polar residues. Residues serine 385 and serine 386 each carry the phosphoserine modification.

The protein belongs to the FAM13 family.

In Homo sapiens (Human), this protein is Protein FAM13C (FAM13C).